The primary structure comprises 232 residues: Heptaprenylglyceryl phosphate synthase (232 aa).

Residue Lys12 coordinates sn-glycerol 1-phosphate. Mg(2+) contacts are provided by Asp14 and Thr40. Sn-glycerol 1-phosphate-binding positions include 159–164 (YLEYSG), Gly189, and 209–210 (GN).

The protein belongs to the GGGP/HepGP synthase family. Group I subfamily. In terms of assembly, homodimer. Mg(2+) is required as a cofactor.

It catalyses the reaction sn-glycerol 1-phosphate + all-trans-heptaprenyl diphosphate = 3-heptaprenyl-sn-glycero-1-phosphate + diphosphate. It participates in membrane lipid metabolism; glycerophospholipid metabolism. In terms of biological role, prenyltransferase that catalyzes in vivo the transfer of the heptaprenyl moiety of heptaprenyl pyrophosphate (HepPP; 35 carbon atoms) to the C3 hydroxyl of sn-glycerol-1-phosphate (G1P), producing heptaprenylglyceryl phosphate (HepGP). This reaction is an ether-bond-formation step in the biosynthesis of archaea-type G1P-based membrane lipids found in Bacillales. This chain is Heptaprenylglyceryl phosphate synthase, found in Shouchella clausii (strain KSM-K16) (Alkalihalobacillus clausii).